Reading from the N-terminus, the 151-residue chain is Transcriptional repressor NrdR (151 aa).

A zinc finger lies at 3 to 34 (CPKCGSLNDKVLETRQSKEGVVIKRRRECLNC). Positions 49 to 139 (IEVIKKNNTV…VFDGFEDIKD (91 aa)) constitute an ATP-cone domain.

It belongs to the NrdR family. The cofactor is Zn(2+).

Negatively regulates transcription of bacterial ribonucleotide reductase nrd genes and operons by binding to NrdR-boxes. This chain is Transcriptional repressor NrdR, found in Sulfurihydrogenibium sp. (strain YO3AOP1).